The following is a 62-amino-acid chain: MTIAFQLAVFALIATSFLLVIGVPVVLASPDGWSSSKNAVFSGASLWIGLVFLVGILNSFIS.

Transmembrane regions (helical) follow at residues 8–28 (AVFA…VVLA) and 41–61 (FSGA…NSFI).

This sequence belongs to the PsbZ family. PSII is composed of 1 copy each of membrane proteins PsbA, PsbB, PsbC, PsbD, PsbE, PsbF, PsbH, PsbI, PsbJ, PsbK, PsbL, PsbM, PsbT, PsbY, PsbZ, Psb30/Ycf12, at least 3 peripheral proteins of the oxygen-evolving complex and a large number of cofactors. It forms dimeric complexes.

The protein localises to the plastid. The protein resides in the chloroplast thylakoid membrane. Its function is as follows. May control the interaction of photosystem II (PSII) cores with the light-harvesting antenna, regulates electron flow through the 2 photosystem reaction centers. PSII is a light-driven water plastoquinone oxidoreductase, using light energy to abstract electrons from H(2)O, generating a proton gradient subsequently used for ATP formation. This Anthoceros angustus (Hornwort) protein is Photosystem II reaction center protein Z.